We begin with the raw amino-acid sequence, 270 residues long: Glucosamine-6-phosphate deaminase (270 aa).

The Proton acceptor; for enolization step role is filled by aspartate 72. The For ring-opening step role is filled by aspartate 141. Histidine 143 functions as the Proton acceptor; for ring-opening step in the catalytic mechanism. Glutamate 148 functions as the For ring-opening step in the catalytic mechanism.

This sequence belongs to the glucosamine/galactosamine-6-phosphate isomerase family. NagB subfamily. Homohexamer.

It catalyses the reaction alpha-D-glucosamine 6-phosphate + H2O = beta-D-fructose 6-phosphate + NH4(+). The protein operates within amino-sugar metabolism; N-acetylneuraminate degradation; D-fructose 6-phosphate from N-acetylneuraminate: step 5/5. With respect to regulation, allosterically activated by N-acetylglucosamine 6-phosphate (GlcNAc6P). Functionally, catalyzes the reversible isomerization-deamination of glucosamine 6-phosphate (GlcN6P) to form fructose 6-phosphate (Fru6P) and ammonium ion. In Photorhabdus laumondii subsp. laumondii (strain DSM 15139 / CIP 105565 / TT01) (Photorhabdus luminescens subsp. laumondii), this protein is Glucosamine-6-phosphate deaminase.